We begin with the raw amino-acid sequence, 76 residues long: Sec-independent protein translocase protein TatA (76 aa).

The helical transmembrane segment at 1–21 (MGGISIWQLLIIALIVVLLFG) threads the bilayer. The segment at 43–76 (MSSEDEKKAIEDTSAEKTAQTEEKKTESKDKEQA) is disordered. Over residues 46 to 76 (EDEKKAIEDTSAEKTAQTEEKKTESKDKEQA) the composition is skewed to basic and acidic residues.

Belongs to the TatA/E family. In terms of assembly, the Tat system comprises two distinct complexes: a TatABC complex, containing multiple copies of TatA, TatB and TatC subunits, and a separate TatA complex, containing only TatA subunits. Substrates initially bind to the TatABC complex, which probably triggers association of the separate TatA complex to form the active translocon.

It is found in the cell inner membrane. In terms of biological role, part of the twin-arginine translocation (Tat) system that transports large folded proteins containing a characteristic twin-arginine motif in their signal peptide across membranes. TatA could form the protein-conducting channel of the Tat system. This Shewanella loihica (strain ATCC BAA-1088 / PV-4) protein is Sec-independent protein translocase protein TatA.